The following is a 428-amino-acid chain: Sorting nexin-31 (428 aa).

In terms of domain architecture, PX spans Met-1 to Thr-107.

This sequence belongs to the sorting nexin family.

Its function is as follows. May be involved in protein trafficking. This chain is Sorting nexin-31 (snx31), found in Xenopus tropicalis (Western clawed frog).